The sequence spans 138 residues: Ribosome-binding factor A (138 aa).

It belongs to the RbfA family. In terms of assembly, monomer. Binds 30S ribosomal subunits, but not 50S ribosomal subunits or 70S ribosomes.

It localises to the cytoplasm. In terms of biological role, one of several proteins that assist in the late maturation steps of the functional core of the 30S ribosomal subunit. Associates with free 30S ribosomal subunits (but not with 30S subunits that are part of 70S ribosomes or polysomes). Required for efficient processing of 16S rRNA. May interact with the 5'-terminal helix region of 16S rRNA. The polypeptide is Ribosome-binding factor A (Bradyrhizobium sp. (strain ORS 278)).